The chain runs to 236 residues: Ribosome assembly factor MRT4 (236 aa).

It belongs to the universal ribosomal protein uL10 family. Associates with the pre-60S ribosomal particle.

Its subcellular location is the nucleus. The protein localises to the nucleolus. It is found in the cytoplasm. Component of the ribosome assembly machinery. Nuclear paralog of the ribosomal protein P0, it binds pre-60S subunits at an early stage of assembly in the nucleolus, and is replaced by P0 in cytoplasmic pre-60S subunits and mature 80S ribosomes. The protein is Ribosome assembly factor MRT4 of Saccharomyces cerevisiae (strain ATCC 204508 / S288c) (Baker's yeast).